Here is a 440-residue protein sequence, read N- to C-terminus: Thymidine phosphorylase (440 aa).

The protein belongs to the thymidine/pyrimidine-nucleoside phosphorylase family. As to quaternary structure, homodimer.

The enzyme catalyses thymidine + phosphate = 2-deoxy-alpha-D-ribose 1-phosphate + thymine. It participates in pyrimidine metabolism; dTMP biosynthesis via salvage pathway; dTMP from thymine: step 1/2. In terms of biological role, the enzymes which catalyze the reversible phosphorolysis of pyrimidine nucleosides are involved in the degradation of these compounds and in their utilization as carbon and energy sources, or in the rescue of pyrimidine bases for nucleotide synthesis. This Salmonella schwarzengrund (strain CVM19633) protein is Thymidine phosphorylase.